The sequence spans 389 residues: Na(+)/H(+) antiporter NhaA (389 aa).

The next 11 helical transmembrane spans lie at 14-34 (AGGI…NSPL), 59-79 (LILW…GLEV), 95-115 (SLPT…YLLF), 124-144 (AGWA…MALL), 154-174 (VFLL…IALF), 177-197 (TDLS…LVGL), 213-233 (LILW…GVII), 257-277 (PWST…VYVG), 292-312 (IALG…YIAV), 328-348 (IAPV…IASL), and 363-383 (LGTL…LSKV).

This sequence belongs to the NhaA Na(+)/H(+) (TC 2.A.33) antiporter family.

The protein localises to the cell inner membrane. The enzyme catalyses Na(+)(in) + 2 H(+)(out) = Na(+)(out) + 2 H(+)(in). Functionally, na(+)/H(+) antiporter that extrudes sodium in exchange for external protons. In Shewanella baltica (strain OS223), this protein is Na(+)/H(+) antiporter NhaA.